The following is a 568-amino-acid chain: Urease subunit alpha (568 aa).

The Urease domain maps to 133 to 568 (GGVDTHIHFI…LPLAQKYFLF (436 aa)). The Ni(2+) site is built by His-138, His-140, and Lys-221. Lys-221 is modified (N6-carboxylysine). His-223 is a binding site for substrate. Residues His-250 and His-276 each contribute to the Ni(2+) site. His-324 (proton donor) is an active-site residue. Asp-364 lines the Ni(2+) pocket.

This sequence belongs to the metallo-dependent hydrolases superfamily. Urease alpha subunit family. As to quaternary structure, heterohexamer of 3 UreC (alpha) and 3 UreAB (gamma/beta) subunits. It depends on Ni cation as a cofactor. Carboxylation allows a single lysine to coordinate two nickel ions.

The protein resides in the cytoplasm. The enzyme catalyses urea + 2 H2O + H(+) = hydrogencarbonate + 2 NH4(+). It participates in nitrogen metabolism; urea degradation; CO(2) and NH(3) from urea (urease route): step 1/1. The protein is Urease subunit alpha of Deinococcus radiodurans (strain ATCC 13939 / DSM 20539 / JCM 16871 / CCUG 27074 / LMG 4051 / NBRC 15346 / NCIMB 9279 / VKM B-1422 / R1).